The following is a 150-amino-acid chain: Small ribosomal subunit protein eS19 (150 aa).

It belongs to the eukaryotic ribosomal protein eS19 family. In terms of assembly, part of the 30S ribosomal subunit.

In terms of biological role, may be involved in maturation of the 30S ribosomal subunit. This is Small ribosomal subunit protein eS19 from Pyrococcus horikoshii (strain ATCC 700860 / DSM 12428 / JCM 9974 / NBRC 100139 / OT-3).